Consider the following 273-residue polypeptide: Non-homologous end joining protein Ku (273 aa).

One can recognise a Ku domain in the interval 13-190 (KLSLVTCPVA…FTGIEKKSDA (178 aa)). Residues 227–251 (KKKAKKPSKAKASKSTKGDDEEKSN) are disordered. Basic residues predominate over residues 228–240 (KKAKKPSKAKASK).

The protein belongs to the prokaryotic Ku family. In terms of assembly, homodimer. Interacts with LigD.

With LigD forms a non-homologous end joining (NHEJ) DNA repair enzyme, which repairs dsDNA breaks with reduced fidelity. Binds linear dsDNA with 5'- and 3'- overhangs but not closed circular dsDNA nor ssDNA. Recruits and stimulates the ligase activity of LigD. The sequence is that of Non-homologous end joining protein Ku from Allorhizobium ampelinum (strain ATCC BAA-846 / DSM 112012 / S4) (Agrobacterium vitis (strain S4)).